A 216-amino-acid polypeptide reads, in one-letter code: Somatotropin (216 aa).

The N-terminal stretch at Met-1–Ala-26 is a signal peptide. His-45 contacts Zn(2+). A disulfide bond links Cys-78 and Cys-189. Ser-131 carries the phosphoserine modification. A Zn(2+)-binding site is contributed by Glu-198. An intrachain disulfide couples Cys-206 to Cys-214.

This sequence belongs to the somatotropin/prolactin family.

The protein resides in the secreted. Its function is as follows. Plays an important role in growth control. Its major role in stimulating body growth is to stimulate the liver and other tissues to secrete IGF1. It stimulates both the differentiation and proliferation of myoblasts. It also stimulates amino acid uptake and protein synthesis in muscle and other tissues. The sequence is that of Somatotropin (GH1) from Oryctolagus cuniculus (Rabbit).